The following is a 264-amino-acid chain: Apolipoprotein A-I (264 aa).

Residues 1-18 (MKAVVLAVAVLFLTGSQA) form the signal peptide. 2 repeat units span residues 67-88 (LKLV…EQLG) and 89-110 (PVTQ…EEMN). The segment at 67-264 (LKLVDNWDTV…DETSKRLSTQ (198 aa)) is 10 X approximate tandem repeats. Met-109 carries the post-translational modification Methionine sulfoxide. A 3; half-length repeat occupies 111-121 (KDLEEVKKQVQ). 3 consecutive repeat copies span residues 122–143 (PYLD…QKVG), 144–165 (PLGA…ERLV), and 166–187 (PVGE…SNLS). One copy of the 7; truncated repeat lies at 188–207 (PYSDKMRERLAQHLAKLKDS). Methionine sulfoxide is present on Met-193. Repeat unit 8 spans residues 208–229 (TTLAEYRTKASNHLQTLSEKAK). The stretch at 230 to 240 (PALEDLRQGLT) is one 9; half-length repeat. Repeat unit 10 spans residues 241–264 (PMLESFRATIMGWIDETSKRLSTQ). Position 242 is a methionine sulfoxide (Met-242).

Belongs to the apolipoprotein A1/A4/E family. As to quaternary structure, homodimer. Interacts with APOA1BP and CLU. Component of a sperm activating protein complex (SPAP), consisting of APOA1, an immunoglobulin heavy chain, an immunoglobulin light chain and albumin. Interacts with NDRG1. Interacts with SCGB3A2. Interacts with NAXE and YJEFN3. Post-translationally, glycosylated. Palmitoylated. In terms of processing, phosphorylation sites are present in the extracellular medium.

The protein resides in the secreted. Functionally, participates in the reverse transport of cholesterol from tissues to the liver for excretion by promoting cholesterol efflux from tissues and by acting as a cofactor for the lecithin cholesterol acyltransferase (LCAT). As part of the SPAP complex, activates spermatozoa motility. The chain is Apolipoprotein A-I (Apoa1) from Peromyscus maniculatus bairdii (Prairie deer mouse).